Here is a 187-residue protein sequence, read N- to C-terminus: MAASMANFRTLRVLSKIFHGHFTAASAVQHHTACPRLVHTVSVFSPPSPAITESEEPDTLYQRLSVQVKGHDRAVLDSYEFFATLAAKELGLSLEKVFEPPKHIDKLTLLKSRHIFKKHRVQYEMRTHYRCIQISRITGSSARVYLEYIQRNLPEGVAMEVTKTAMEKIPEHIQKPLWDDNKPEASG.

Belongs to the universal ribosomal protein uS10 family. Component of the mitochondrial ribosome small subunit (28S) which comprises a 12S rRNA and about 30 distinct proteins.

Its subcellular location is the mitochondrion. The polypeptide is Small ribosomal subunit protein uS10m (mrps10) (Danio rerio (Zebrafish)).